The following is a 598-amino-acid chain: ATP-dependent lipid A-core flippase (598 aa).

The segment covering 1–15 has biased composition (polar residues); that stretch reads MSQAYQPDSTKTSAK. The tract at residues 1-21 is disordered; it reads MSQAYQPDSTKTSAKTPVAPT. Helical transmembrane passes span 44-64, 85-105, 172-192, and 269-289; these read WWAILLTIIGFAINAATEIWI, LFPFIIVMLFFVRGVGSFLGN, VVALMGFLLYSNWRLTLILFV, and INTPAVQLLMAMAMAVVVWLA. Residues 48 to 329 enclose the ABC transmembrane type-1 domain; it reads LLTIIGFAIN…LTDVNQQLQR (282 aa). The ABC transporter domain maps to 360–595; the sequence is IKLDNVSLVY…HGHYAQMYAR (236 aa). 393–400 provides a ligand contact to ATP; that stretch reads GRSGAGKS.

Belongs to the ABC transporter superfamily. Lipid exporter (TC 3.A.1.106) family. Homodimer.

It localises to the cell inner membrane. The catalysed reaction is ATP + H2O + lipid A-core oligosaccharideSide 1 = ADP + phosphate + lipid A-core oligosaccharideSide 2.. Its function is as follows. Involved in lipopolysaccharide (LPS) biosynthesis. Translocates lipid A-core from the inner to the outer leaflet of the inner membrane. Transmembrane domains (TMD) form a pore in the inner membrane and the ATP-binding domain (NBD) is responsible for energy generation. In Psychrobacter cryohalolentis (strain ATCC BAA-1226 / DSM 17306 / VKM B-2378 / K5), this protein is ATP-dependent lipid A-core flippase.